The sequence spans 132 residues: Translation initiation factor 5A (132 aa).

The residue at position 36 (lysine 36) is a Hypusine.

The protein belongs to the eIF-5A family.

It is found in the cytoplasm. Functionally, functions by promoting the formation of the first peptide bond. The polypeptide is Translation initiation factor 5A (eIF5A) (Pyrobaculum arsenaticum (strain DSM 13514 / JCM 11321 / PZ6)).